The sequence spans 255 residues: Urease accessory protein UreD 1 (255 aa).

This sequence belongs to the UreD family. UreD, UreF and UreG form a complex that acts as a GTP-hydrolysis-dependent molecular chaperone, activating the urease apoprotein by helping to assemble the nickel containing metallocenter of UreC. The UreE protein probably delivers the nickel.

The protein resides in the cytoplasm. Required for maturation of urease via the functional incorporation of the urease nickel metallocenter. The chain is Urease accessory protein UreD 1 from Streptomyces griseus subsp. griseus (strain JCM 4626 / CBS 651.72 / NBRC 13350 / KCC S-0626 / ISP 5235).